The chain runs to 241 residues: Oil body-associated protein 1B (241 aa).

Residues 1–12 (MEKAVHSSTTSG) show a composition bias toward polar residues. The interval 1–22 (MEKAVHSSTTSGPAVPGETTKT) is disordered.

This sequence belongs to the OBAP family.

This is Oil body-associated protein 1B from Arabidopsis thaliana (Mouse-ear cress).